We begin with the raw amino-acid sequence, 205 residues long: dTTP/UTP pyrophosphatase (205 aa).

The Proton acceptor role is filled by Asp-66.

This sequence belongs to the Maf family. YhdE subfamily. Requires a divalent metal cation as cofactor.

The protein resides in the cytoplasm. It catalyses the reaction dTTP + H2O = dTMP + diphosphate + H(+). It carries out the reaction UTP + H2O = UMP + diphosphate + H(+). In terms of biological role, nucleoside triphosphate pyrophosphatase that hydrolyzes dTTP and UTP. May have a dual role in cell division arrest and in preventing the incorporation of modified nucleotides into cellular nucleic acids. The protein is dTTP/UTP pyrophosphatase of Anaeromyxobacter sp. (strain Fw109-5).